The following is a 95-amino-acid chain: UPF0235 protein Adeh_1087 (95 aa).

This sequence belongs to the UPF0235 family.

This Anaeromyxobacter dehalogenans (strain 2CP-C) protein is UPF0235 protein Adeh_1087.